A 1380-amino-acid chain; its full sequence is DNA-directed RNA polymerase subunit beta (1380 aa).

The protein belongs to the RNA polymerase beta chain family. As to quaternary structure, the RNAP catalytic core consists of 2 alpha, 1 beta, 1 beta' and 1 omega subunit. When a sigma factor is associated with the core the holoenzyme is formed, which can initiate transcription.

It carries out the reaction RNA(n) + a ribonucleoside 5'-triphosphate = RNA(n+1) + diphosphate. Functionally, DNA-dependent RNA polymerase catalyzes the transcription of DNA into RNA using the four ribonucleoside triphosphates as substrates. The protein is DNA-directed RNA polymerase subunit beta of Ehrlichia ruminantium (strain Gardel).